The primary structure comprises 201 residues: Ribosome maturation factor RimP (201 aa).

Belongs to the RimP family.

It is found in the cytoplasm. Its function is as follows. Required for maturation of 30S ribosomal subunits. The sequence is that of Ribosome maturation factor RimP from Rhizobium johnstonii (strain DSM 114642 / LMG 32736 / 3841) (Rhizobium leguminosarum bv. viciae).